Consider the following 257-residue polypeptide: Transmembrane protein C257L (257 aa).

2 consecutive transmembrane segments (helical) span residues Leu-123–Leu-143 and Met-163–Val-183.

It belongs to the asfivirus C257R family.

The protein localises to the host membrane. It is found in the virion. This African swine fever virus (isolate Tick/South Africa/Pretoriuskop Pr4/1996) (ASFV) protein is Transmembrane protein C257L.